The chain runs to 641 residues: Probable licABCH operon regulator (641 aa).

2 consecutive PRD domains span residues Ile-184–Gln-289 and Ser-296–Glu-403. Phosphohistidine; by HPr occurs at positions 219, 278, 333, and 392. The PTS EIIB type-2 domain occupies Lys-407 to Asn-498. Phosphocysteine; by EIIA is present on Cys-413. The PTS EIIA type-2 domain occupies Arg-499 to Lys-638. The residue at position 559 (His-559) is a Phosphohistidine; by EIIB.

Belongs to the transcriptional antiterminator BglG family.

With respect to regulation, the regulatory activity of LicR is modulated by phosphorylation and dephosphorylation of the various LicR domains. It becomes activated via phosphoryl group transfer from PEP, EI and HPr on the two conserved histidine residues in the PRD 2 domain, whereas phosphorylation of the EIIA-like domain on His-559 by the PTS EIIB component LicB inactivates LicR. In terms of biological role, positive regulator of the licABCH operon. The chain is Probable licABCH operon regulator (licR) from Bacillus subtilis (strain 168).